Consider the following 529-residue polypeptide: Tyrosine-protein kinase Fgr (529 aa).

Residue Gly2 is the site of N-myristoyl glycine attachment. 2 S-palmitoyl cysteine lipidation sites follow: Cys3 and Cys6. Tyr34 carries the post-translational modification Phosphotyrosine. Residues 77 to 138 (IGVTLFIALY…PSNYVAPVDS (62 aa)) form the SH3 domain. In terms of domain architecture, SH2 spans 144-241 (WYFGKIGRKD…GLCNLLIAPC (98 aa)). A Phosphotyrosine modification is found at Tyr208. Ser218 carries the post-translational modification Phosphoserine. A Protein kinase domain is found at 263-516 (ITLERRLGTG…YLQSFLEDYF (254 aa)). ATP is bound by residues 269-277 (LGTGCFGDV) and Lys291. Asp382 functions as the Proton acceptor in the catalytic mechanism. Tyr412 carries the post-translational modification Phosphotyrosine. Tyr523 carries the phosphotyrosine; by SRC modification.

It belongs to the protein kinase superfamily. Tyr protein kinase family. SRC subfamily. As to quaternary structure, interacts with ITGB1, ITGB2, MS4A2/FCER1B, FCER1G, FCGR2A and/or FCGR2B. Interacts (via SH2 domain) with SYK (tyrosine phosphorylated). Interacts (via SH2 domain) with FLT3 (tyrosine phosphorylated). Interacts with PTK2/FAK1. Interacts (via SH2 domain) with HCLS1 (tyrosine phosphorylated by SYK). Interacts with SIRPA and PTPNS1. Interacts (not phosphorylated on tyrosine residues) with CBL; FGR tyrosine phosphorylation promotes dissociation. Interacts with PIK3R1 and FASLG. Interacts with CLNK. Post-translationally, ubiquitinated. Becomes ubiquitinated in response to ITGB2 signaling; this does not lead to degradation. Phosphorylated. Autophosphorylated on tyrosine residues. Becomes phosphorylated in response to FCGR2A and/or FCGR2B engagement, cell adhesion and signaling by ITGB2. Prior phosphorylation at Tyr-523 by SRC inhibits ulterior autophosphorylation at Tyr-412. As to expression, detected in neutrophils, monocytes and natural killer cells (at protein level). Detected in monocytes and large lymphocytes.

It is found in the cell membrane. It localises to the cell projection. Its subcellular location is the ruffle membrane. The protein localises to the cytoplasm. The protein resides in the cytosol. It is found in the cytoskeleton. It localises to the mitochondrion inner membrane. Its subcellular location is the mitochondrion intermembrane space. The enzyme catalyses L-tyrosyl-[protein] + ATP = O-phospho-L-tyrosyl-[protein] + ADP + H(+). Activated by autophosphorylation. Prior phosphorylation at Tyr-523 by SRC inhibits ulterior autophosphorylation at Tyr-412. Activated by phorbol myristate acetate, phosphatidic acid and poly-Lys. Binding (via SH2 domain) of HCLS1 that is already phosphorylated by SYK strongly increases kinase activity. Its function is as follows. Non-receptor tyrosine-protein kinase that transmits signals from cell surface receptors devoid of kinase activity and contributes to the regulation of immune responses, including neutrophil, monocyte, macrophage and mast cell functions, cytoskeleton remodeling in response to extracellular stimuli, phagocytosis, cell adhesion and migration. Promotes mast cell degranulation, release of inflammatory cytokines and IgE-mediated anaphylaxis. Acts downstream of receptors that bind the Fc region of immunoglobulins, such as MS4A2/FCER1B, FCGR2A and/or FCGR2B. Acts downstream of ITGB1 and ITGB2, and regulates actin cytoskeleton reorganization, cell spreading and adhesion. Depending on the context, activates or inhibits cellular responses. Functions as a negative regulator of ITGB2 signaling, phagocytosis and SYK activity in monocytes. Required for normal ITGB1 and ITGB2 signaling, normal cell spreading and adhesion in neutrophils and macrophages. Functions as a positive regulator of cell migration and regulates cytoskeleton reorganization via RAC1 activation. Phosphorylates SYK (in vitro) and promotes SYK-dependent activation of AKT1 and MAP kinase signaling. Phosphorylates PLD2 in antigen-stimulated mast cells, leading to PLD2 activation and the production of the signaling molecules lysophosphatidic acid and diacylglycerol. Promotes activation of PIK3R1. Phosphorylates FASLG, and thereby regulates its ubiquitination and subsequent internalization. Phosphorylates ABL1. Promotes phosphorylation of CBL, CTTN, PIK3R1, PTK2/FAK1, PTK2B/PYK2 and VAV2. Phosphorylates HCLS1 that has already been phosphorylated by SYK, but not unphosphorylated HCLS1. Together with CLNK, it acts as a negative regulator of natural killer cell-activating receptors and inhibits interferon-gamma production. The polypeptide is Tyrosine-protein kinase Fgr (FGR) (Homo sapiens (Human)).